The chain runs to 407 residues: MKRVFLIVLDSFGIGSSPDADKFNDVGSNTFGHIVEKCFLGEANVGRKGVLCIPNLVKLGIINAAKESTGQYPLGFNYSSNVIASYGFASEISSGKDTTSGHWEIAGVPVLDDWCYFKEKQNSFPESLLEKIIRRSELTGFIGNCHASGTDIISRLGEEHIQTKKPIVYTSSDSVFQIACHEEFFGLSNLYKLCKTVRFILDRYNYKVARVIARPFIGNDKLQFQRTGNRRDFSIKPFATTVIKKLIDEKQGQVIAIGKVSDIYGGIGISKNIKSTGLYELCSTTIHEMKKALNNTIVFTNLVDFDSNWGHRRDVSGYAKGLELFDSRLSEIISLVQKNDLLILTADHGCDPTWIGTDHTRENVPVLIYSPGIKKNFLGHRKTFADIGQTIAKYFLLTDMSYGQNML.

Residues D10, D306, H311, D347, H348, and H359 each contribute to the Mn(2+) site.

It belongs to the phosphopentomutase family. The cofactor is Mn(2+).

Its subcellular location is the cytoplasm. The catalysed reaction is 2-deoxy-alpha-D-ribose 1-phosphate = 2-deoxy-D-ribose 5-phosphate. It carries out the reaction alpha-D-ribose 1-phosphate = D-ribose 5-phosphate. It functions in the pathway carbohydrate degradation; 2-deoxy-D-ribose 1-phosphate degradation; D-glyceraldehyde 3-phosphate and acetaldehyde from 2-deoxy-alpha-D-ribose 1-phosphate: step 1/2. Isomerase that catalyzes the conversion of deoxy-ribose 1-phosphate (dRib-1-P) and ribose 1-phosphate (Rib-1-P) to deoxy-ribose 5-phosphate (dRib-5-P) and ribose 5-phosphate (Rib-5-P), respectively. This Buchnera aphidicola subsp. Acyrthosiphon pisum (strain Tuc7) protein is Phosphopentomutase.